The chain runs to 469 residues: 3-isopropylmalate dehydratase large subunit (469 aa).

[4Fe-4S] cluster-binding residues include Cys-350, Cys-410, and Cys-413.

Belongs to the aconitase/IPM isomerase family. LeuC type 1 subfamily. As to quaternary structure, heterodimer of LeuC and LeuD. [4Fe-4S] cluster is required as a cofactor.

The enzyme catalyses (2R,3S)-3-isopropylmalate = (2S)-2-isopropylmalate. Its pathway is amino-acid biosynthesis; L-leucine biosynthesis; L-leucine from 3-methyl-2-oxobutanoate: step 2/4. Catalyzes the isomerization between 2-isopropylmalate and 3-isopropylmalate, via the formation of 2-isopropylmaleate. The protein is 3-isopropylmalate dehydratase large subunit of Mesorhizobium japonicum (strain LMG 29417 / CECT 9101 / MAFF 303099) (Mesorhizobium loti (strain MAFF 303099)).